Reading from the N-terminus, the 181-residue chain is Immunity-related GTPase family M protein (181 aa).

The 150-residue stretch at 32–181 (TPVNITMAGD…NLQKERVCEY (150 aa)) folds into the IRG-type G domain. GTP contacts are provided by residues 41–48 (DSGNGMST), 66–70 (TELVK), and 147–149 (KLD).

This sequence belongs to the TRAFAC class dynamin-like GTPase superfamily. IRG family. In terms of assembly, interacts with ULK1; promoting the coassembly of ULK1 and BECN1. Interacts with BECN1; enhancing BECN1-interacting partners and influencing the composition of the BECN1 complex. Interacts with ATG16L1. Interacts with NOD2; promoting IRGM 'Lys-63'-linked polyubiquitination, which is required for interactions with the core autophagy factors. Interacts with STX17; promoting STX17 recruitment to autophagosomes. Interacts with ATG8 proteins (GABARAP, GABARAPL1, GABARAPL2, MAP1LC3A, MAP1LC3B and MAP1LC3C); promoting STX17 recruitment to autophagosomes. Interacts with TFEB; promoting association between TFEB and PPP3CB and TFEB dephosphorylation. Interacts with PPP3CB; promoting association between TFEB and PPP3CB and TFEB dephosphorylation. Interacts with NLRP3; preventing NLRP3 inflammasome assembly and promoting SQSTM1/p62-dependent autophagic degradation of NLRP3. Interacts with CGAS; promoting SQSTM1/p62-dependent autophagic degradation of CGAS. Interacts with RIGI/RIG-I; promoting SQSTM1/p62-dependent autophagic degradation of RIGI/RIG-I. Interacts with NOD1; promoting SQSTM1/p62-dependent autophagic degradation of RIGI/RIG-I. Interacts with NOD2; promoting SQSTM1/p62-dependent autophagic degradation of RIGI/RIG-I. Interacts with RIPK2; promoting SQSTM1/p62-dependent autophagic degradation of RIGI/RIG-I. Ubiquitinated via 'Lys-63'-linked polyubiquitination in a NOD2-dependent process. 'Lys-63'-linked polyubiquitination is required for interactions with the core autophagy factors. In terms of tissue distribution, widely expressed (at protein level). Expressed in several tissues including colon, small bowel and peripheral blood leukocytes.

The protein localises to the golgi apparatus membrane. It localises to the cell membrane. The protein resides in the cytoplasmic vesicle. It is found in the phagosome membrane. Its subcellular location is the autophagosome membrane. The protein localises to the lysosome membrane. It localises to the late endosome membrane. The protein resides in the mitochondrion membrane. It is found in the cell projection. Its subcellular location is the phagocytic cup. The protein localises to the mitochondrion. It catalyses the reaction GTP + H2O = GDP + phosphate + H(+). Functionally, immunity-related GTPase that plays important roles in innate immunity and inflammatory response. Acts as a dynamin-like protein that binds to intracellular membranes and promotes remodeling and trafficking of those membranes. Required for clearance of acute protozoan and bacterial infections by interacting with autophagy and lysosome regulatory proteins, thereby promoting the fusion of phagosomes with lysosomes for efficient degradation of cargo including microbes. Regulates selective autophagy, including xenophagy and mitophagy, both directly and indirectly. Directly regulates autophagy by acting as a molecular adapter that promotes the coassembly of the core autophagy machinery to mediate antimicrobial defense: IRGM (1) activates AMPK, which in turn phosphorylates ULK1 and BECN1 to induce autophagy, (2) promotes the coassembly of ULK1 and BECN1, enhancing BECN1-interacting partners and (3) influences the composition of the BECN1 complex, by competing with the negative regulators BCL2 and RUBCN, to trigger autophagy. Also activates autophagy by promoting recruitment of STX17 to autophagosomes. In collaboration with ATG8 proteins, regulate lysosomal biogenesis, a fundamental process for any autophagic pathway, by promoting TFEB dephosphorylation. Also modulates autophagy by assisting with autophagosome formation and preventing lysosomal deacidification. While activating autophagy, acts as a key negative regulator of the inflammatory and interferon responses both by (1) promoting mitophagy and (2) mediating autophagy-dependent degradation of effectors of the inflammatory response. Promotes degradation of damaged and IFNG/IFN-gamma-stressed mitochondria via mitophagy, preventing cytosolic release of ligands that activate inflammation. Acts as a suppressor of inflammation by promoting recruitment of inflammation effectors, such as CGAS, RIGI/RIG-I and NLRP3, to autophagosome membranes, leading to their SQSTM1/p62-dependent autophagic degradation. Also directly inhibits assembly of the NLRP3 inflammasome by preventing the association between NLRP3 and PYCARD. Acts as a negative regulator of antiviral innate immune response by suppressing the RIPK2-dependent pro-inflammatory response: mediates recruitment of RIPosomes, composed of RIPK2 and NOD1 or NOD2, to autophagosome membranes, promoting their SQSTM1/p62-dependent autophagic degradation. In terms of biological role, acts as a positive regulator of mitophagy in response to intracellular mycobacteria infection: specifically binds cardiolipin, leading to its translocation to mitochondria, where it promotes affected mitochondrial fission and mitophagy. (Microbial infection) Following infection by hepatitis C virus (HCV), promotes HCV-triggered membrane remodeling, leading to autophagy and Golgi fragmentation, a step required for HCV replication. This chain is Immunity-related GTPase family M protein, found in Homo sapiens (Human).